The following is a 429-amino-acid chain: Enolase (429 aa).

Glutamine 163 lines the (2R)-2-phosphoglycerate pocket. Glutamate 205 (proton donor) is an active-site residue. Mg(2+)-binding residues include aspartate 242, glutamate 287, and aspartate 314. Residues lysine 339, arginine 368, serine 369, and lysine 390 each coordinate (2R)-2-phosphoglycerate. The Proton acceptor role is filled by lysine 339.

The protein belongs to the enolase family. Requires Mg(2+) as cofactor.

The protein localises to the cytoplasm. It localises to the secreted. The protein resides in the cell surface. It carries out the reaction (2R)-2-phosphoglycerate = phosphoenolpyruvate + H2O. It functions in the pathway carbohydrate degradation; glycolysis; pyruvate from D-glyceraldehyde 3-phosphate: step 4/5. In terms of biological role, catalyzes the reversible conversion of 2-phosphoglycerate (2-PG) into phosphoenolpyruvate (PEP). It is essential for the degradation of carbohydrates via glycolysis. This is Enolase from Anaeromyxobacter dehalogenans (strain 2CP-1 / ATCC BAA-258).